Consider the following 682-residue polypeptide: Pesticidal crystal protein Cry19Ba (682 aa).

This sequence belongs to the delta endotoxin family.

Its function is as follows. Promotes colloidosmotic lysis by binding to the midgut epithelial cells of mosquitos. Has larvicidal activity against Culex pipiens molestus, but not to Anopheles stephensi. The chain is Pesticidal crystal protein Cry19Ba from Bacillus thuringiensis subsp. higo.